A 440-amino-acid polypeptide reads, in one-letter code: Probable pectate lyase 10 (440 aa).

The first 28 residues, 1 to 28, serve as a signal peptide directing secretion; it reads MVIFSRSFLALSTTLIILALCINSSTMA. A disordered region spans residues 32–56; sequence EDLNSHSSSNSSTANKLPNDDGAWN. N-linked (GlcNAc...) asparagine glycosylation is found at N41 and N76. Residues D238, D262, and D266 each coordinate Ca(2+). R318 is an active-site residue.

It belongs to the polysaccharide lyase 1 family. Ca(2+) serves as cofactor.

The enzyme catalyses Eliminative cleavage of (1-&gt;4)-alpha-D-galacturonan to give oligosaccharides with 4-deoxy-alpha-D-galact-4-enuronosyl groups at their non-reducing ends.. The protein operates within glycan metabolism; pectin degradation; 2-dehydro-3-deoxy-D-gluconate from pectin: step 2/5. This chain is Probable pectate lyase 10, found in Arabidopsis thaliana (Mouse-ear cress).